The sequence spans 133 residues: Rodlin protein RdlB (133 aa).

The first 28 residues, 1-28 (MIKKVVAYAAIAASVMGASAAAAPQAMA), serve as a signal peptide directing secretion. Amyloid-forming regions lie at residues 45 to 57 (QYFGNSMTTGNMS) and 59 to 70 (QMALIQGSFNKP). The segment at 45–70 (QYFGNSMTTGNMSPQMALIQGSFNKP) is required for amyloid formation.

The protein belongs to the rodlin family.

It localises to the secreted. The protein localises to the cell wall. Its subcellular location is the spore wall. Functionally, forms part of the rodlet layer on the spore surface; despite their high similarity both RdlA and RdlB are required for rodlet formation. Plays a role in cell adhesion to polystyrene plates. Forms amyloid-like fibrils in vitro composed of stacked beta-sheets. This chain is Rodlin protein RdlB, found in Streptomyces coelicolor (strain ATCC BAA-471 / A3(2) / M145).